The following is a 140-amino-acid chain: Gas vesicle protein O (140 aa).

Positions 1–14 (MSDQGNEHANHDGI) are enriched in basic and acidic residues. Residues 1 to 61 (MSDQGNEHAN…DSTIGLSDAQ (61 aa)) form a disordered region. Residues 39–56 (QTASDEAVSNQSPDSTIG) show a composition bias toward polar residues.

The protein belongs to the gas vesicle GvpO family. As to quaternary structure, forms homodimers, forms a GvpN-GvpO heterodimer, interacts with GvpC, GvpF, GvpI and GvpL, might interact with GvpA.

The protein resides in the gas vesicle. Its subcellular location is the cytoplasm. Functionally, a minor component of the gas vesicle (GV), may play a role in transcription and/or RNA stability and/or in GV assembly. Gas vesicles are small, hollow, gas filled protein structures found in some microorganisms. They allow positioning of halobacteria at the optimal depth for growth in the poorly aerated shallow brine pools of their habitat. Its function is as follows. Expression of a 9.5 kb mc-vac DNA fragment containing 2 divergently transcribed regions (gvpD-gvpE-gvpF-gvpG-gvpH-gvpI-gvpJ-gvpK-gvpL-gvpM and gvpA-gvpC-gvpN-gvpO) allows H.volcanii to produce gas vesicles. The polypeptide is Gas vesicle protein O (Haloferax mediterranei (strain ATCC 33500 / DSM 1411 / JCM 8866 / NBRC 14739 / NCIMB 2177 / R-4) (Halobacterium mediterranei)).